Reading from the N-terminus, the 2479-residue chain is Centrosomal protein of 290 kDa (2479 aa).

The interval 1–695 (MPPNINWKEI…IESKNAEGIF (695 aa)) is self-association (with itself or C-terminus). Coiled coils occupy residues 59–565 (MKMK…ERGK), 598–664 (SLKN…MQKD), 697–931 (ASLH…VCEK), 958–1027 (SLSE…IEQA), 1071–1498 (QRAE…ILSR), 1533–1584 (HTLK…LHIL), and 1635–2452 (DSLS…SEQL). Residues 149–163 (ALRNEEAENENSKLR) show a composition bias toward basic and acidic residues. A disordered region spans residues 149–168 (ALRNEEAENENSKLRRENKR). The segment at 696 to 896 (DASLHLKAQV…TVLQVNEKSL (201 aa)) is interaction with IQCB1. The tract at residues 1966–2479 (TTGMTVDQVL…EESPVNFPIY (514 aa)) is self-association (with itself or N-terminus). The segment at 2458 to 2479 (SPVAASEEFEDEEESPVNFPIY) is disordered.

As to quaternary structure, part of the tectonic-like complex (also named B9 complex). Interacts with ATF4 via its N-terminal region. Associates with the BBSome complex, interacting (via N-terminus) with BBS4. Interacts with IQCB1/NPHP5; IQCB1 and CEP290/NPHP6 are proposed to form a functional NPHP5-6 module localized to the centrosome. Interacts with NPHP4; the interaction likely requires additional interactors. Interacts with ZNF423, FAM161A, CEP162, CEP162, CEP131, TALPID3, CCDC13, CC2D2A, RPGRIP1. Can self-associate (homo- or heteromeric). Interacts with CCP110; required for suppressing cilia formation. Interacts with RPGR. Associates (via C-terminus) with microtubules; association to microtubule is reduced in response to cellular stress, such as ultraviolet light (UV) radiation or heat shock, in a process that requires p38 MAP kinase signaling. Interacts with FAM161A. Interacts with PCM1. Interacts with CCDC66. Interacts with ARMC9 and CSPP1. In terms of processing, ubiquitinated. May undergo monoubiquitination; monoubiquitination is inhibited in response to cellular stress, such as ultraviolet light (UV) radiation or heat shock, but does not cause its displacement from centriolar satellites. As to expression, ubiquitous. Expressed strongly in placenta and weakly in brain.

The protein localises to the cytoplasm. It is found in the cytoskeleton. Its subcellular location is the microtubule organizing center. It localises to the centrosome. The protein resides in the centriolar satellite. The protein localises to the nucleus. It is found in the cell projection. Its subcellular location is the cilium. It localises to the cilium basal body. The protein resides in the centriole. The protein localises to the cytoplasmic vesicle. In terms of biological role, involved in early and late steps in cilia formation. Its association with CCP110 is required for inhibition of primary cilia formation by CCP110. May play a role in early ciliogenesis in the disappearance of centriolar satellites and in the transition of primary ciliar vesicles (PCVs) to capped ciliary vesicles (CCVs). Required for the centrosomal recruitment of RAB8A and for the targeting of centriole satellite proteins to centrosomes such as of PCM1. Required for the correct localization of ciliary and phototransduction proteins in retinal photoreceptor cells; may play a role in ciliary transport processes. Required for efficient recruitment of RAB8A to primary cilium. In the ciliary transition zone is part of the tectonic-like complex which is required for tissue-specific ciliogenesis and may regulate ciliary membrane composition. Involved in regulation of the BBSome complex integrity, specifically for presence of BBS2, BBS5 and BBS8/TTC8 in the complex, and in ciliary targeting of selected BBSome cargos. May play a role in controlling entry of the BBSome complex to cilia possibly implicating IQCB1/NPHP5. Activates ATF4-mediated transcription. The chain is Centrosomal protein of 290 kDa (CEP290) from Homo sapiens (Human).